The sequence spans 189 residues: Homeobox protein HD-2 (189 aa).

Residues 119 to 181 constitute a DNA-binding region (homeobox; TALE-type); the sequence is KPRTRANFPM…NARRRILPFM (63 aa).

It belongs to the TALE/KNOX homeobox family.

Its subcellular location is the nucleus. The polypeptide is Homeobox protein HD-2 (HD-2) (Encephalitozoon cuniculi (strain GB-M1) (Microsporidian parasite)).